The sequence spans 340 residues: Glutaminyl-peptide cyclotransferase (340 aa).

A signal peptide spans 1–23 (MAIGSVVFAAAGLLLLLLPPSHQ). Asn42 is a glycosylation site (N-linked (GlcNAc...) asparagine). Positions 85 and 91 each coordinate alpha-D-mannopyranose. A disulfide bond links Cys113 and Cys136. Asp131 contacts Zn(2+). Gln151 and Arg155 together coordinate alpha-D-mannopyranose. The N-linked (GlcNAc...) asparagine glycan is linked to Asn156. The Proton acceptor role is filled by Glu170. Glu171 is a binding site for Zn(2+). The active-site Proton acceptor is the Asp218. Residue His297 coordinates Zn(2+). Leu306 serves as a coordination point for alpha-D-mannopyranose.

Belongs to the glutaminyl-peptide cyclotransferase family.

Its subcellular location is the secreted. The enzyme catalyses N-terminal L-glutaminyl-[peptide] = N-terminal 5-oxo-L-prolyl-[peptide] + NH4(+). With respect to regulation, inhibited by imidazoles (imidazole, benzimidazole, 1-benzylimidazole, 1-methylimidazole, P150/03, N-omega-acetylhistamine and 4-methylimidazole) and cysteamines (cysteamine, N-dimethylcysteamine and N-diethylcysteamine). Partially inhibited by PDB50 1(3,4-dimethoxyphenyl)-3-(3-imidazol-1-ylpropyl)thiourea. Functionally, acts as a glutaminyl-peptide cyclotransferase. Responsible for the biosynthesis of pyroglutamyl peptides. Might be more efficient in the conversion of tri and tetrapeptides in vitro. Might have a relative preference for substrates containing hydrophobic amino acids in vitro. The chain is Glutaminyl-peptide cyclotransferase from Drosophila melanogaster (Fruit fly).